Reading from the N-terminus, the 101-residue chain is Urease subunit beta (101 aa).

This sequence belongs to the urease beta subunit family. Heterotrimer of UreA (gamma), UreB (beta) and UreC (alpha) subunits. Three heterotrimers associate to form the active enzyme.

It localises to the cytoplasm. The enzyme catalyses urea + 2 H2O + H(+) = hydrogencarbonate + 2 NH4(+). It functions in the pathway nitrogen metabolism; urea degradation; CO(2) and NH(3) from urea (urease route): step 1/1. This chain is Urease subunit beta, found in Agrobacterium fabrum (strain C58 / ATCC 33970) (Agrobacterium tumefaciens (strain C58)).